A 96-amino-acid chain; its full sequence is Class I hydrophobin 3 (96 aa).

Positions 1–18 (MQFAKIASVLAMAAAAVA) are cleaved as a signal peptide. 4 disulfide bridges follow: Cys43/Cys72, Cys51/Cys66, Cys52/Cys57, and Cys73/Cys92.

This sequence belongs to the fungal hydrophobin family.

It localises to the secreted. The protein resides in the cell wall. In terms of biological role, aerial growth, conidiation, and dispersal of filamentous fungi in the environment rely upon a capability of their secreting small amphipathic proteins called hydrophobins (HPBs) with low sequence identity. Class I can self-assemble into an outermost layer of rodlet bundles on aerial cell surfaces, conferring cellular hydrophobicity that supports fungal growth, development and dispersal; whereas Class II form highly ordered films at water-air interfaces through intermolecular interactions but contribute nothing to the rodlet structure. Does not seem to be important for the ability to cause seedling disease. This is Class I hydrophobin 3 from Gibberella moniliformis (Maize ear and stalk rot fungus).